Here is a 227-residue protein sequence, read N- to C-terminus: Phosphoribosylformylglycinamidine synthase subunit PurQ (227 aa).

Residues 3-225 (FAVIVLPGSN…VKNWRDTHVT (223 aa)) enclose the Glutamine amidotransferase type-1 domain. The Nucleophile role is filled by cysteine 86. Catalysis depends on residues histidine 194 and glutamate 196.

As to quaternary structure, part of the FGAM synthase complex composed of 1 PurL, 1 PurQ and 2 PurS subunits.

It localises to the cytoplasm. It carries out the reaction N(2)-formyl-N(1)-(5-phospho-beta-D-ribosyl)glycinamide + L-glutamine + ATP + H2O = 2-formamido-N(1)-(5-O-phospho-beta-D-ribosyl)acetamidine + L-glutamate + ADP + phosphate + H(+). The catalysed reaction is L-glutamine + H2O = L-glutamate + NH4(+). It participates in purine metabolism; IMP biosynthesis via de novo pathway; 5-amino-1-(5-phospho-D-ribosyl)imidazole from N(2)-formyl-N(1)-(5-phospho-D-ribosyl)glycinamide: step 1/2. Its function is as follows. Part of the phosphoribosylformylglycinamidine synthase complex involved in the purines biosynthetic pathway. Catalyzes the ATP-dependent conversion of formylglycinamide ribonucleotide (FGAR) and glutamine to yield formylglycinamidine ribonucleotide (FGAM) and glutamate. The FGAM synthase complex is composed of three subunits. PurQ produces an ammonia molecule by converting glutamine to glutamate. PurL transfers the ammonia molecule to FGAR to form FGAM in an ATP-dependent manner. PurS interacts with PurQ and PurL and is thought to assist in the transfer of the ammonia molecule from PurQ to PurL. This is Phosphoribosylformylglycinamidine synthase subunit PurQ from Bacillus pumilus (strain SAFR-032).